We begin with the raw amino-acid sequence, 146 residues long: Holo-[acyl-carrier-protein] synthase (146 aa).

Mg(2+) contacts are provided by Asp9 and Glu63.

The protein belongs to the P-Pant transferase superfamily. AcpS family. Mg(2+) serves as cofactor.

The protein localises to the cytoplasm. The enzyme catalyses apo-[ACP] + CoA = holo-[ACP] + adenosine 3',5'-bisphosphate + H(+). Functionally, transfers the 4'-phosphopantetheine moiety from coenzyme A to a Ser of acyl-carrier-protein. This Burkholderia ambifaria (strain ATCC BAA-244 / DSM 16087 / CCUG 44356 / LMG 19182 / AMMD) (Burkholderia cepacia (strain AMMD)) protein is Holo-[acyl-carrier-protein] synthase.